Reading from the N-terminus, the 179-residue chain is Acireductone dioxygenase (179 aa).

Residues histidine 88, histidine 90, glutamate 94, and histidine 133 each coordinate Fe(2+). 4 residues coordinate Ni(2+): histidine 88, histidine 90, glutamate 94, and histidine 133.

It belongs to the acireductone dioxygenase (ARD) family. Monomer. Interacts with MMP14. Fe(2+) is required as a cofactor. It depends on Ni(2+) as a cofactor.

It localises to the cytoplasm. The protein localises to the nucleus. Its subcellular location is the cell membrane. The enzyme catalyses 1,2-dihydroxy-5-(methylsulfanyl)pent-1-en-3-one + O2 = 4-methylsulfanyl-2-oxobutanoate + formate + 2 H(+). The catalysed reaction is 1,2-dihydroxy-5-(methylsulfanyl)pent-1-en-3-one + O2 = 3-(methylsulfanyl)propanoate + CO + formate + 2 H(+). Its pathway is amino-acid biosynthesis; L-methionine biosynthesis via salvage pathway; L-methionine from S-methyl-5-thio-alpha-D-ribose 1-phosphate: step 5/6. Functionally, catalyzes 2 different reactions between oxygen and the acireductone 1,2-dihydroxy-3-keto-5-methylthiopentene (DHK-MTPene) depending upon the metal bound in the active site. Fe-containing acireductone dioxygenase (Fe-ARD) produces formate and 2-keto-4-methylthiobutyrate (KMTB), the alpha-ketoacid precursor of methionine in the methionine recycle pathway. Ni-containing acireductone dioxygenase (Ni-ARD) produces methylthiopropionate, carbon monoxide and formate, and does not lie on the methionine recycle pathway. In Xenopus laevis (African clawed frog), this protein is Acireductone dioxygenase (adi1).